The sequence spans 126 residues: NADH-quinone oxidoreductase subunit A (126 aa).

The next 3 helical transmembrane spans lie at 11–31 (IAIQLMVTLGFISVTLLSSWL), 64–84 (FLVATLFVLFDVEVIFFYPWA), and 98–118 (EGFVKMLLFMTSLLIGFIYVI).

The protein belongs to the complex I subunit 3 family. As to quaternary structure, NDH-1 is composed of 14 different subunits. Subunits NuoA, H, J, K, L, M, N constitute the membrane sector of the complex.

The protein resides in the cell inner membrane. It catalyses the reaction a quinone + NADH + 5 H(+)(in) = a quinol + NAD(+) + 4 H(+)(out). In terms of biological role, NDH-1 shuttles electrons from NADH, via FMN and iron-sulfur (Fe-S) centers, to quinones in the respiratory chain. The immediate electron acceptor for the enzyme in this species is believed to be a menaquinone. Couples the redox reaction to proton translocation (for every two electrons transferred, four hydrogen ions are translocated across the cytoplasmic membrane), and thus conserves the redox energy in a proton gradient. The protein is NADH-quinone oxidoreductase subunit A of Cytophaga hutchinsonii (strain ATCC 33406 / DSM 1761 / CIP 103989 / NBRC 15051 / NCIMB 9469 / D465).